A 76-amino-acid chain; its full sequence is Small ribosomal subunit protein bS18 (76 aa).

It belongs to the bacterial ribosomal protein bS18 family. Part of the 30S ribosomal subunit. Forms a tight heterodimer with protein bS6.

Functionally, binds as a heterodimer with protein bS6 to the central domain of the 16S rRNA, where it helps stabilize the platform of the 30S subunit. This Aeromonas hydrophila subsp. hydrophila (strain ATCC 7966 / DSM 30187 / BCRC 13018 / CCUG 14551 / JCM 1027 / KCTC 2358 / NCIMB 9240 / NCTC 8049) protein is Small ribosomal subunit protein bS18.